Consider the following 146-residue polypeptide: Small ribosomal subunit protein uS9 (146 aa).

Position 3 is a phosphoserine (Ser-3). At Lys-60 the chain carries N6-acetyllysine.

This sequence belongs to the universal ribosomal protein uS9 family. In terms of assembly, component of the small ribosomal subunit. Part of the small subunit (SSU) processome, composed of more than 70 proteins and the RNA chaperone small nucleolar RNA (snoRNA) U3.

It is found in the cytoplasm. The protein localises to the nucleus. The protein resides in the nucleolus. Functionally, component of the small ribosomal subunit. The ribosome is a large ribonucleoprotein complex responsible for the synthesis of proteins in the cell. Part of the small subunit (SSU) processome, first precursor of the small eukaryotic ribosomal subunit. During the assembly of the SSU processome in the nucleolus, many ribosome biogenesis factors, an RNA chaperone and ribosomal proteins associate with the nascent pre-rRNA and work in concert to generate RNA folding, modifications, rearrangements and cleavage as well as targeted degradation of pre-ribosomal RNA by the RNA exosome. In Bos taurus (Bovine), this protein is Small ribosomal subunit protein uS9 (RPS16).